The following is a 191-amino-acid chain: MQKVLERKIDAWAQALQKRNNLDRIAYLKIKLGLEVFFNNLFKTIVVYGLALLFHVFLYTLTVHLSYFAIRHYAHGAHAKSTFACYIESIILFVILPWILIKVDIPQIFMIVLAAVAFILICLYSPAITRKQPIPNHMRKKKKITAIFVAGILLIISFFIKQPFNELVQLGIVLIGAAQLPIFFPKQTKEG.

Helical transmembrane passes span isoleucine 45 to leucine 65, serine 81 to isoleucine 101, isoleucine 108 to isoleucine 128, isoleucine 144 to phenylalanine 164, and asparagine 165 to proline 185.

Belongs to the AgrB family.

The protein resides in the cell membrane. Essential for the production of a quorum sensing system signal molecule, the autoinducing peptide (AIP). This quorum sensing system is responsible for the regulation of the expression of virulence factor genes. Involved in the proteolytic processing of AgrD, the precursor of AIP. The chain is Accessory gene regulator protein B from Staphylococcus carnosus (strain TM300).